The chain runs to 653 residues: Fructose-1,6-bisphosphatase class 3 (653 aa).

This sequence belongs to the FBPase class 3 family. It depends on Mn(2+) as a cofactor.

The catalysed reaction is beta-D-fructose 1,6-bisphosphate + H2O = beta-D-fructose 6-phosphate + phosphate. Its pathway is carbohydrate biosynthesis; gluconeogenesis. This chain is Fructose-1,6-bisphosphatase class 3, found in Listeria monocytogenes serovar 1/2a (strain ATCC BAA-679 / EGD-e).